A 547-amino-acid polypeptide reads, in one-letter code: DNA ligase (547 aa).

Glu244 is a binding site for ATP. Residue Lys246 is the N6-AMP-lysine intermediate of the active site. Arg251, Arg266, Glu295, Phe334, Arg405, and Lys411 together coordinate ATP.

It belongs to the ATP-dependent DNA ligase family. The cofactor is Mg(2+).

It carries out the reaction ATP + (deoxyribonucleotide)n-3'-hydroxyl + 5'-phospho-(deoxyribonucleotide)m = (deoxyribonucleotide)n+m + AMP + diphosphate.. Its function is as follows. DNA ligase that seals nicks in double-stranded DNA during DNA replication, DNA recombination and DNA repair. This is DNA ligase from Methanospirillum hungatei JF-1 (strain ATCC 27890 / DSM 864 / NBRC 100397 / JF-1).